Consider the following 96-residue polypeptide: MAKYEILYIIRPNIEEEAKNALVARFDSILTDNGATIVESKAWEKRRLAYEIKDFREGLYHIVNVEANNDEALKEFDRLSKINGDILRHMIVKLDA.

This sequence belongs to the bacterial ribosomal protein bS6 family.

In terms of biological role, binds together with bS18 to 16S ribosomal RNA. In Streptococcus suis (strain 98HAH33), this protein is Small ribosomal subunit protein bS6.